The sequence spans 426 residues: Histidine--tRNA ligase 1 (426 aa).

The protein belongs to the class-II aminoacyl-tRNA synthetase family. As to quaternary structure, homodimer.

The protein resides in the cytoplasm. The catalysed reaction is tRNA(His) + L-histidine + ATP = L-histidyl-tRNA(His) + AMP + diphosphate + H(+). This Shouchella clausii (strain KSM-K16) (Alkalihalobacillus clausii) protein is Histidine--tRNA ligase 1.